Reading from the N-terminus, the 167-residue chain is Mediator of RNA polymerase II transcription subunit 10 (167 aa).

Residues 53–88 (LSTHTKPQPPSQDEEQKEKQDDTPEGSANDPLLRDI) form a disordered region.

The protein belongs to the Mediator complex subunit 10 family. Component of the Mediator complex.

It localises to the nucleus. Its function is as follows. Component of the Mediator complex, a coactivator involved in the regulated transcription of nearly all RNA polymerase II-dependent genes. Mediator functions as a bridge to convey information from gene-specific regulatory proteins to the basal RNA polymerase II transcription machinery. Mediator is recruited to promoters by direct interactions with regulatory proteins and serves as a scaffold for the assembly of a functional preinitiation complex with RNA polymerase II and the general transcription factors. In Neosartorya fischeri (strain ATCC 1020 / DSM 3700 / CBS 544.65 / FGSC A1164 / JCM 1740 / NRRL 181 / WB 181) (Aspergillus fischerianus), this protein is Mediator of RNA polymerase II transcription subunit 10 (nut2).